Consider the following 126-residue polypeptide: Anti-adapter protein IraD (126 aa).

The protein belongs to the GpW/Gp25 family. IraD subfamily. As to quaternary structure, interacts with RssB.

The protein resides in the cytoplasm. Its function is as follows. Inhibits RpoS proteolysis by regulating RssB activity, thereby increasing the stability of the sigma stress factor RpoS during oxidative stress. Its effect on RpoS stability is due to its interaction with RssB, which probably blocks the interaction of RssB with RpoS, and the consequent delivery of the RssB-RpoS complex to the ClpXP protein degradation pathway. The polypeptide is Anti-adapter protein IraD (Salmonella enteritidis PT4 (strain P125109)).